Here is a 361-residue protein sequence, read N- to C-terminus: Neuronal-specific septin-3 (361 aa).

Residues 1 to 46 (MSEIVPPEVRPKPAVPAKPSHVAPPSSAPFVPSPQGTGGEGQGSGR) are disordered. Residues 15–34 (VPAKPSHVAPPSSAPFVPSP) are compositionally biased toward low complexity. Gly residues predominate over residues 36–46 (GTGGEGQGSGR). Residues 70–342 (AGFDFNIMVV…ETYRAKRLND (273 aa)) form the Septin-type G domain. Residues 80 to 87 (GQSGLGKS) form a G1 motif region. GTP is bound by residues 80–87 (GQSGLGKS) and Thr114. The interval 137–140 (DTPG) is G3 motif. Residues 219 to 222 (AKSD) form a G4 motif region. GTP-binding positions include 220-228 (KSDTLTPEE), Gly276, and Arg291. A disordered region spans residues 341 to 361 (NDNGGLHPISSSGHDTQESNL). Residues 349–361 (ISSSGHDTQESNL) are compositionally biased toward polar residues.

Belongs to the TRAFAC class TrmE-Era-EngA-EngB-Septin-like GTPase superfamily. Septin GTPase family.

Its subcellular location is the cytoplasm. Functionally, may be involved in cytokinesis. This is Neuronal-specific septin-3 from Danio rerio (Zebrafish).